A 188-amino-acid polypeptide reads, in one-letter code: NADH-quinone oxidoreductase subunit I (188 aa).

2 consecutive 4Fe-4S ferredoxin-type domains span residues 44–74 and 90–119; these read LNRY…VEGA and RVYQ…MTNE. [4Fe-4S] cluster is bound by residues Cys54, Cys57, Cys60, Cys64, Cys99, Cys102, Cys105, and Cys109. Residues 144 to 188 are disordered; sequence GMVDSPHPMAPGTTAEDYYRGTVTGGAAPASQDEPEADDTAGDRP. Residues 176–188 are compositionally biased toward acidic residues; it reads DEPEADDTAGDRP.

It belongs to the complex I 23 kDa subunit family. As to quaternary structure, NDH-1 is composed of 14 different subunits. Subunits NuoA, H, J, K, L, M, N constitute the membrane sector of the complex. It depends on [4Fe-4S] cluster as a cofactor.

The protein localises to the cell membrane. The enzyme catalyses a quinone + NADH + 5 H(+)(in) = a quinol + NAD(+) + 4 H(+)(out). NDH-1 shuttles electrons from NADH, via FMN and iron-sulfur (Fe-S) centers, to quinones in the respiratory chain. The immediate electron acceptor for the enzyme in this species is believed to be ubiquinone. Couples the redox reaction to proton translocation (for every two electrons transferred, four hydrogen ions are translocated across the cytoplasmic membrane), and thus conserves the redox energy in a proton gradient. In Rhodococcus opacus (strain B4), this protein is NADH-quinone oxidoreductase subunit I.